A 716-amino-acid chain; its full sequence is 1,4-alpha-glucan branching enzyme GlgB (716 aa).

Asp394 (nucleophile) is an active-site residue. Glu447 serves as the catalytic Proton donor.

This sequence belongs to the glycosyl hydrolase 13 family. GlgB subfamily. As to quaternary structure, monomer.

The enzyme catalyses Transfers a segment of a (1-&gt;4)-alpha-D-glucan chain to a primary hydroxy group in a similar glucan chain.. Its pathway is glycan biosynthesis; glycogen biosynthesis. Its function is as follows. Catalyzes the formation of the alpha-1,6-glucosidic linkages in glycogen by scission of a 1,4-alpha-linked oligosaccharide from growing alpha-1,4-glucan chains and the subsequent attachment of the oligosaccharide to the alpha-1,6 position. This chain is 1,4-alpha-glucan branching enzyme GlgB, found in Photobacterium profundum (strain SS9).